A 383-amino-acid polypeptide reads, in one-letter code: MCASQKNQELIGGLILFSAALLAIVVNNSPLASYYAMLETINVKLGIENLVIDKNLMHWINDGLMAIYFLYIGLEIKREIIVGTLSKPSNIITPAIAAFAGLAMPSLIYLSINHDIKVINGWAIPSATDIAFTLGILALLGTRVPAKLKLLVITIAIFDDIAAIAIIAIFYTKSLSLLSLSLGTLFILAMIICNRIFKINRSSVYVVLGFFAWFCTIKSGVHATLAGFTTALCIPFRENDKDSPANFMEDSLHPWIIYFILPVFAFANAGISFSGISFSILFEPITLGIIWGLFVGKQLGIFSILAVFKKLKWFKLGESFSNLQLYGISLLCGIGFTMSLFIGVLAFNDTHLLNAIKIGVVVGSVLSGFFGYIVLRFIVTNPS.

11 consecutive transmembrane segments (helical) span residues 10 to 30, 56 to 76, 91 to 111, 121 to 141, 150 to 170, 174 to 194, 206 to 226, 254 to 274, 289 to 308, 327 to 347, and 355 to 375; these read LIGGLILFSAALLAIVVNNSP, LMHWINDGLMAIYFLYIGLEI, IITPAIAAFAGLAMPSLIYLS, GWAIPSATDIAFTLGILALLG, LLVITIAIFDDIAAIAIIAIF, SLSLLSLSLGTLFILAMIICN, VVLGFFAWFCTIKSGVHATLA, PWIIYFILPVFAFANAGISFS, IIWGLFVGKQLGIFSILAVF, GISLLCGIGFTMSLFIGVLAF, and AIKIGVVVGSVLSGFFGYIVL.

This sequence belongs to the NhaA Na(+)/H(+) (TC 2.A.33) antiporter family.

The protein localises to the cell inner membrane. It catalyses the reaction Na(+)(in) + 2 H(+)(out) = Na(+)(out) + 2 H(+)(in). Its function is as follows. Na(+)/H(+) antiporter that extrudes sodium in exchange for external protons. The chain is Na(+)/H(+) antiporter NhaA from Francisella tularensis subsp. mediasiatica (strain FSC147).